The chain runs to 298 residues: MAVSARDYWDLTKPKVVALIVFTALVGMFLAIPGMPTWLQVRTGALGFLGIWLAASAAAAINQLLDAKIDAQMARTSWRPLVVGKVRPAQVLAFASVLIVISMTILVVWVNVITAVLTFASLIGYAVIYTVYLKRATSQNIVIGGLAGATPPMLGWAAVTGLPTSADWINASLLVLIIFIWTPPHFWALAIFRRADYAKAAIPMLPVTHGVPHTRKQILVYTVLLAIVTLLPVAVGMSGVFYLGGAVVLNAVFLWYAWRMLDPPDELFSMKMFGYSVVYLMALFAFLMVDHLLLPWVR.

8 consecutive transmembrane segments (helical) span residues 16–36, 45–65, 97–117, 141–161, 172–192, 223–243, 244–264, and 277–297; these read VVAL…PGMP, ALGF…NQLL, VLIV…TAVL, IVIG…AVTG, SLLV…LAIF, VLLA…VFYL, GGAV…LDPP, and VVYL…LPWV.

It belongs to the UbiA prenyltransferase family. Protoheme IX farnesyltransferase subfamily.

It localises to the cell inner membrane. It catalyses the reaction heme b + (2E,6E)-farnesyl diphosphate + H2O = Fe(II)-heme o + diphosphate. It functions in the pathway porphyrin-containing compound metabolism; heme O biosynthesis; heme O from protoheme: step 1/1. In terms of biological role, converts heme B (protoheme IX) to heme O by substitution of the vinyl group on carbon 2 of heme B porphyrin ring with a hydroxyethyl farnesyl side group. The sequence is that of Protoheme IX farnesyltransferase from Xanthomonas campestris pv. campestris (strain 8004).